A 313-amino-acid polypeptide reads, in one-letter code: MTSAPLAARLSIPSGPLFFPVTAYRPDGALNLDVYREHVRRGVEAGAAAVFACCGTGEFHALAPEEFERCVGAAVEETAGRVPVVAGAGYGTALAVRFARLAQDAGADGLLAMPPYLVVAGQEGLLRHYRELAAATSLETIVYQRDNAVFTPEAVVELARTDGIIGFKDGLGDLDLMQRVVSAVRTEVPGDFLYFNGLPTAELTGLAYRGIGITLYSSAVFCFAPEIALAFHKALNSGDDATVNRLLDGFYRPFVDLRAQGRGYAVSLVKAGVRLRGLDVGEVRPPLHEPTEDHVKQLAQLVDRGYALLQEGM.

It belongs to the DapA family.

It catalyses the reaction 5-dehydro-4-deoxy-D-glucarate + H(+) = 2,5-dioxopentanoate + CO2 + H2O. It participates in carbohydrate acid metabolism; D-glucarate degradation; 2,5-dioxopentanoate from D-glucarate: step 2/2. The polypeptide is Probable 5-dehydro-4-deoxyglucarate dehydratase 1 (Streptomyces avermitilis (strain ATCC 31267 / DSM 46492 / JCM 5070 / NBRC 14893 / NCIMB 12804 / NRRL 8165 / MA-4680)).